The sequence spans 562 residues: Calmodulin-binding protein 60 F (562 aa).

A disordered region spans residues 1 to 22 (MENSMNNRGHGHNQEHADNLPE). The segment at 5–84 (MNNRGHGHNQ…STSRSTEPNK (80 aa)) is calmodulin-binding. The span at 12–22 (HNQEHADNLPE) shows a compositional bias: basic and acidic residues. Residues 154–273 (EDDKDWTREH…ALHKKLLKSN (120 aa)) form a DNA-binding region.

It belongs to the plant ACBP60 protein family. As to quaternary structure, interacts with calmodulin (CaM).

The protein localises to the nucleus. Transcription activator that binds DNA in a sequence-specific manner, likely 5'-GAAATTTTGG-3', to promote the expression of target genes. The sequence is that of Calmodulin-binding protein 60 F from Arabidopsis thaliana (Mouse-ear cress).